The primary structure comprises 226 residues: Lipoprotein-releasing system ATP-binding protein LolD (226 aa).

The region spanning 6–226 (IELKSVERHY…TLADGKVVPL (221 aa)) is the ABC transporter domain. Residue 42–49 (APSGTGKS) coordinates ATP.

The protein belongs to the ABC transporter superfamily. Lipoprotein translocase (TC 3.A.1.125) family. The complex is composed of two ATP-binding proteins (LolD) and two transmembrane proteins (LolC and LolE).

The protein resides in the cell inner membrane. Its function is as follows. Part of the ABC transporter complex LolCDE involved in the translocation of mature outer membrane-directed lipoproteins, from the inner membrane to the periplasmic chaperone, LolA. Responsible for the formation of the LolA-lipoprotein complex in an ATP-dependent manner. The chain is Lipoprotein-releasing system ATP-binding protein LolD from Mesorhizobium japonicum (strain LMG 29417 / CECT 9101 / MAFF 303099) (Mesorhizobium loti (strain MAFF 303099)).